The chain runs to 1375 residues: BNI1-related protein 1 (1375 aa).

One can recognise a GBD/FH3 domain in the interval 94-490; it reads CMPQDASLVE…YLIDSFQVST (397 aa). A coiled-coil region spans residues 520–601; sequence QSDEIARRAV…ITTHQRLYDQ (82 aa). The residue at position 621 (serine 621) is a Phosphoserine. The FH1 domain maps to 659-851; that stretch reads SSYLTDANNE…LVTPPAPPLP (193 aa). The disordered stretch occupies residues 661–684; that stretch reads YLTDANNENESQNESEDKSKDSLF. A Phosphoserine modification is found at serine 751. Disordered stretches follow at residues 764–785, 817–839, and 1285–1309; these read KLPQ…QSLL, AVPP…GPSN, and KSLL…GEKV. Pro residues-rich tracts occupy residues 767–781 and 818–828; these read QLPP…PPLP and VPPPPPPPPLP. Positions 868 to 1290 constitute an FH2 domain; it reads DLKPPPTEKR…YEQRKSLLDM (423 aa). In terms of domain architecture, DAD spans 1302–1336; sequence DENDGEKVNRDAVDLLISKLREVKKDPEPLRRRKS.

It belongs to the formin homology family. BNI1 subfamily. Interacts with profilin at the FH1 domain.

May organize microtubules by mediating spindle positioning and movement in the budding process. Potential target of the RHO family members. This is BNI1-related protein 1 (BNR1) from Saccharomyces cerevisiae (strain ATCC 204508 / S288c) (Baker's yeast).